A 282-amino-acid chain; its full sequence is MSNKIINLGSIEIANDKPFVLFGGMNVLESRDLAMSIAETYAEVTQKLGIPYVFKASFDKANRSSVNSYRGPGMEEGLKIFEEIKKTFNLPLITDVHETYQCAPVAEVVDIIQLPAFLARQTDLVVAMAKTGAIINVKKPQFLAPHEMRHIITKFNEAGNDEIILCERGSCFGYNNLVVDMLGMDEMKQSGYPVIFDATHALQRPGGRADSAGGRRAQATELARSGMALGLAGLFIEAHPDPDNAKCDGPCALPLHQLENYLKQMKAIDDLVKSFDPIDTSK.

Belongs to the KdsA family.

It localises to the cytoplasm. It carries out the reaction D-arabinose 5-phosphate + phosphoenolpyruvate + H2O = 3-deoxy-alpha-D-manno-2-octulosonate-8-phosphate + phosphate. Its pathway is carbohydrate biosynthesis; 3-deoxy-D-manno-octulosonate biosynthesis; 3-deoxy-D-manno-octulosonate from D-ribulose 5-phosphate: step 2/3. It participates in bacterial outer membrane biogenesis; lipopolysaccharide biosynthesis. In Shewanella sp. (strain ANA-3), this protein is 2-dehydro-3-deoxyphosphooctonate aldolase.